We begin with the raw amino-acid sequence, 90 residues long: Small ribosomal subunit protein bS16 (90 aa).

Belongs to the bacterial ribosomal protein bS16 family.

In Listeria innocua serovar 6a (strain ATCC BAA-680 / CLIP 11262), this protein is Small ribosomal subunit protein bS16.